A 182-amino-acid chain; its full sequence is Ribosome-recycling factor (182 aa).

This sequence belongs to the RRF family.

The protein localises to the cytoplasm. Its function is as follows. Responsible for the release of ribosomes from messenger RNA at the termination of protein biosynthesis. May increase the efficiency of translation by recycling ribosomes from one round of translation to another. The polypeptide is Ribosome-recycling factor (Synechococcus sp. (strain CC9605)).